Reading from the N-terminus, the 286-residue chain is Probable xyloglucan endotransglucosylase/hydrolase protein 23 (286 aa).

Positions 1–24 are cleaved as a signal peptide; sequence MAMISYSTIVVALLASFMICSVSA. The 190-residue stretch at 25-214 folds into the GH16 domain; the sequence is NFQRDVEITW…WSKAPFTASY (190 aa). E100 serves as the catalytic Nucleophile. E104 serves as the catalytic Proton donor. E104 contributes to the xyloglucan binding site. Residue N108 is glycosylated (N-linked (GlcNAc...) asparagine). Xyloglucan contacts are provided by residues 117–119, 127–129, 193–194, and G198; these read HTN, DRE, and EW. The cysteines at positions 222 and 231 are disulfide-linked. N-linked (GlcNAc...) asparagine glycosylation occurs at N233. C269 and C283 are oxidised to a cystine. R274 contributes to the xyloglucan binding site.

The protein belongs to the glycosyl hydrolase 16 family. XTH group 2 subfamily. In terms of processing, contains at least one intrachain disulfide bond essential for its enzymatic activity.

It is found in the secreted. The protein resides in the cell wall. Its subcellular location is the extracellular space. The protein localises to the apoplast. The catalysed reaction is breaks a beta-(1-&gt;4) bond in the backbone of a xyloglucan and transfers the xyloglucanyl segment on to O-4 of the non-reducing terminal glucose residue of an acceptor, which can be a xyloglucan or an oligosaccharide of xyloglucan.. Functionally, catalyzes xyloglucan endohydrolysis (XEH) and/or endotransglycosylation (XET). Cleaves and religates xyloglucan polymers, an essential constituent of the primary cell wall, and thereby participates in cell wall construction of growing tissues. This is Probable xyloglucan endotransglucosylase/hydrolase protein 23 (XTH23) from Arabidopsis thaliana (Mouse-ear cress).